We begin with the raw amino-acid sequence, 81 residues long: MKTLLLTLVVVTIVCLDLGYTMTCCNQQSSQPKTTTPCAESSCYKKTWKDNRGTIIERGCGCPNVKPGIDLMCCKTDECNN.

Positions 1 to 21 (MKTLLLTLVVVTIVCLDLGYT) are cleaved as a signal peptide. 4 disulfide bridges follow: cysteine 24–cysteine 43, cysteine 38–cysteine 60, cysteine 62–cysteine 73, and cysteine 74–cysteine 79.

This sequence belongs to the three-finger toxin family. Short-chain subfamily. Type I alpha-neurotoxin sub-subfamily. In terms of tissue distribution, expressed by the venom gland.

The protein resides in the secreted. Its function is as follows. Binds to muscle nicotinic acetylcholine receptor (nAChR) and inhibit acetylcholine from binding to the receptor, thereby impairing neuromuscular transmission. The sequence is that of Short neurotoxin 1 from Tropidechis carinatus (Australian rough-scaled snake).